A 516-amino-acid polypeptide reads, in one-letter code: Importin subunit alpha-B (516 aa).

A compositionally biased stretch (basic and acidic residues) spans 1 to 29 (MQRSKQETRKSQYKKSIDSDESRRKREEA). A disordered region spans residues 1-54 (MQRSKQETRKSQYKKSIDSDESRRKREEASLSIRKNKREESLLKKRTQAVPGST). Positions 1–55 (MQRSKQETRKSQYKKSIDSDESRRKREEASLSIRKNKREESLLKKRTQAVPGSTP) constitute an IBB domain. ARM repeat units follow at residues 55–96 (PVKV…KLLS), 100–140 (SPPI…NIAS), 143–182 (PEQT…NIAG), 185–227 (HYCR…NFCR), 229–268 (KPQP…YLSD), 271–310 (NERI…NIVT), 313–352 (DNQT…NITA), 355–394 (KNQI…NATS), and 398–437 (PQQI…NILV). The disordered stretch occupies residues 490 to 516 (EQEDEGDLMPEGSSFSFSNQTNSNFNL). A compositionally biased stretch (low complexity) spans 502-516 (SSFSFSNQTNSNFNL).

Belongs to the importin alpha family. In terms of assembly, forms a complex with tnpo/importin subunit beta.

It is found in the cytoplasm. The protein localises to the nucleus envelope. Its function is as follows. Functions in nuclear protein import via a substrate-importin alpha-beta transport complex that passes though the nuclear pore complexes (NPC). Binds specifically and directly to substrates containing either a simple or bipartite NLS motif. The sequence is that of Importin subunit alpha-B from Dictyostelium discoideum (Social amoeba).